A 202-amino-acid chain; its full sequence is IPLPPHPGHPGYINFSYEVLTPLKWYQSMMRHEYPSYGYEPMGGWLHHQIIPVLSQQHSPSHSLPPQHHIPIMAAQQPAPPQQPVMPVPGQHPMAPTQHHQPNLPQPGQQPYQPQPAQQPQPHQPIQPIQPIQPIQPMQPMQPMQPMQPMQPMQPQTPVHAVRPLPPQPPLPPMFPMQPMSPMLPDMEAWPATDKTKREEVD.

Position 16 is a phosphoserine (Ser16). The disordered stretch occupies residues 77–202 (QPAPPQQPVM…TDKTKREEVD (126 aa)). The span at 78–87 (PAPPQQPVMP) shows a compositional bias: pro residues. Positions 101–112 (QPNLPQPGQQPY) are enriched in low complexity. Residues 113-125 (QPQPAQQPQPHQP) are compositionally biased toward pro residues. Over residues 126–158 (IQPIQPIQPIQPMQPMQPMQPMQPMQPMQPQTP) the composition is skewed to low complexity. The segment covering 164 to 176 (PLPPQPPLPPMFP) has biased composition (pro residues).

This sequence belongs to the amelogenin family.

The protein resides in the secreted. It is found in the extracellular space. The protein localises to the extracellular matrix. Functionally, plays a role in the biomineralization of teeth. Seems to regulate the formation of crystallites during the secretory stage of tooth enamel development. Thought to play a major role in the structural organization and mineralization of developing enamel. The polypeptide is Amelogenin (AMEL) (Monodelphis domestica (Gray short-tailed opossum)).